Reading from the N-terminus, the 101-residue chain is Integration host factor subunit beta (101 aa).

It belongs to the bacterial histone-like protein family. Heterodimer of an alpha and a beta chain.

This protein is one of the two subunits of integration host factor, a specific DNA-binding protein that functions in genetic recombination as well as in transcriptional and translational control. In Rhodopseudomonas palustris (strain BisB5), this protein is Integration host factor subunit beta.